Consider the following 288-residue polypeptide: Polyketide biosynthesis malonyl CoA-acyl carrier protein transacylase PksC (288 aa).

Catalysis depends on residues Ser-87 and His-193.

The protein belongs to the FabD family.

It is found in the cytoplasm. It catalyses the reaction holo-[ACP] + malonyl-CoA = malonyl-[ACP] + CoA. It participates in antibiotic biosynthesis; bacillaene biosynthesis. Involved in some intermediate steps for the synthesis of the antibiotic polyketide bacillaene which is involved in secondary metabolism. It catalyzes the transfer of the malonyl-CoA group to the acyl-carrier-protein AcpK (Mal-AcpK). The sequence is that of Polyketide biosynthesis malonyl CoA-acyl carrier protein transacylase PksC (pksC) from Bacillus subtilis (strain 168).